The primary structure comprises 261 residues: U1 small nuclear ribonucleoprotein 70 kDa homolog (261 aa).

One can recognise an RRM domain in the interval 100 to 178 (KTMFLSRLSY…RRIVVDVERG (79 aa)). The tract at residues 192 to 261 (GLGGRHYTKE…DSSPKRRRYN (70 aa)) is disordered. The segment covering 198 to 215 (YTKERPRRERGSRFRGDS) has biased composition (basic and acidic residues). The span at 216 to 235 (GFRGGYRGGFRKSSGGGSRF) shows a compositional bias: gly residues.

As to quaternary structure, component of the spliceosome, where it is associated with snRNP U1. Associates with U1 snRNA.

It is found in the nucleus. Involved in nuclear mRNA splicing. Essential for growth. This is U1 small nuclear ribonucleoprotein 70 kDa homolog from Schizosaccharomyces pombe (strain 972 / ATCC 24843) (Fission yeast).